A 209-amino-acid polypeptide reads, in one-letter code: Peroxynitrite isomerase 2 (209 aa).

Positions 56-62 match the GXWXGXG motif; sequence GVWRGEG. Positions 172 and 199 each coordinate heme b.

The protein belongs to the nitrobindin family. As to quaternary structure, homodimer. It depends on heme b as a cofactor.

It carries out the reaction peroxynitrite = nitrate. The protein operates within nitrogen metabolism. Heme-binding protein able to scavenge peroxynitrite and to protect free L-tyrosine against peroxynitrite-mediated nitration, by acting as a peroxynitrite isomerase that converts peroxynitrite to nitrate. Therefore, this protein likely plays a role in peroxynitrite sensing and in the detoxification of reactive nitrogen and oxygen species (RNS and ROS, respectively). Is able to bind nitric oxide (NO) in vitro, but may act as a sensor of peroxynitrite levels in vivo. The chain is Peroxynitrite isomerase 2 from Mycolicibacterium vanbaalenii (strain DSM 7251 / JCM 13017 / BCRC 16820 / KCTC 9966 / NRRL B-24157 / PYR-1) (Mycobacterium vanbaalenii).